A 1802-amino-acid chain; its full sequence is Transposon Ty4-H Gag-Pol polyprotein (1802 aa).

Residues 39 to 115 (RKVSIKDEQV…IQLLETNENN (77 aa)) adopt a coiled-coil conformation. The segment at 381-501 (NNNLSPVQNE…KTKMVLSRKY (121 aa)) is ty4 protease. Residue aspartate 414 is the For protease activity; shared with dimeric partner of the active site. An integrase-type zinc finger-like region spans residues 539–599 (AIKPTSSPGF…EPNEFWCQTC (61 aa)). The region spanning 619–786 (TDHEPGSSWC…LPLKAISRQP (168 aa)) is the Integrase catalytic domain. Mg(2+) contacts are provided by aspartate 630 and aspartate 695. The disordered stretch occupies residues 1223-1248 (KRKRKRHDKNNSLTSYELERDKKRSK). The Reverse transcriptase Ty1/copia-type domain occupies 1375 to 1510 (RNMFMKTLDI…DILGMDLVYN (136 aa)). Aspartate 1383, aspartate 1462, aspartate 1463, aspartate 1644, glutamate 1686, and aspartate 1720 together coordinate Mg(2+). The region spanning 1644–1790 (DASVGSEYDA…KRFIQVLKNK (147 aa)) is the RNase H Ty1/copia-type domain.

In terms of assembly, the protease is a homodimer, whose active site consists of two apposed aspartic acid residues. Post-translationally, proteolytically processed into capsid protein (CA), Ty4 protease (PR), integrase (IN) and reverse transcriptase/ribonuclease H (RT) proteins. Initially, virus-like particles (VLPs) are composed of the structural unprocessed proteins Gag and Gag-Pol, and also contain the host initiator methionine tRNA (tRNA(i)-Met) which serves as a primer for minus-strand DNA synthesis, and a dimer of genomic Ty RNA. Processing of the polyproteins occurs within the particle and proceeds by an ordered pathway, called maturation. First, the protease (PR) is released by autocatalytic cleavage of the Gag-Pol polyprotein, and this cleavage is a prerequisite for subsequent processing at the remaining sites to release the mature structural and catalytic proteins. Maturation takes place prior to the RT reaction and is required to produce transposition-competent VLPs.

The protein resides in the cytoplasm. It localises to the nucleus. It catalyses the reaction DNA(n) + a 2'-deoxyribonucleoside 5'-triphosphate = DNA(n+1) + diphosphate. It carries out the reaction Endonucleolytic cleavage to 5'-phosphomonoester.. Its function is as follows. Capsid protein (CA) is the structural component of the virus-like particle (VLP), forming the shell that encapsulates the retrotransposons dimeric RNA genome. The aspartyl protease (PR) mediates the proteolytic cleavages of the Gag and Gag-Pol polyproteins after assembly of the VLP. Functionally, reverse transcriptase/ribonuclease H (RT) is a multifunctional enzyme that catalyzes the conversion of the retro-elements RNA genome into dsDNA within the VLP. The enzyme displays a DNA polymerase activity that can copy either DNA or RNA templates, and a ribonuclease H (RNase H) activity that cleaves the RNA strand of RNA-DNA heteroduplexes during plus-strand synthesis and hydrolyzes RNA primers. The conversion leads to a linear dsDNA copy of the retrotransposon that includes long terminal repeats (LTRs) at both ends. In terms of biological role, integrase (IN) targets the VLP to the nucleus, where a subparticle preintegration complex (PIC) containing at least integrase and the newly synthesized dsDNA copy of the retrotransposon must transit the nuclear membrane. Once in the nucleus, integrase performs the integration of the dsDNA into the host genome. The chain is Transposon Ty4-H Gag-Pol polyprotein (TY4B-H) from Saccharomyces cerevisiae (strain ATCC 204508 / S288c) (Baker's yeast).